The primary structure comprises 206 residues: uncharacterized protein (206 aa).

The signal sequence occupies residues 1–17; sequence MKGKILFALFLSAGVIA. The N-palmitoyl cysteine moiety is linked to residue C18. C18 carries S-diacylglycerol cysteine lipidation. Positions 21–58 form a coiled coil; that stretch reads ASQAAKQQEVKVAKAETKTKKKESKAEKFRKALAAQDK. The Cytochrome c domain maps to 97–201; it reads GDWRKGESLA…DIVAYLHDPE (105 aa). Heme c is bound by residues C127, C130, and H131.

Its subcellular location is the cell membrane. This is an uncharacterized protein from Aquifex aeolicus (strain VF5).